We begin with the raw amino-acid sequence, 530 residues long: DEK domain-containing chromatin-associated protein 2 (530 aa).

Basic and acidic residues-rich tracts occupy residues 1 to 47 and 57 to 68; these read MATE…AEEE and AKEGELGEKDKE. Positions 1–130 are disordered; that stretch reads MATETLDEKT…PSKSVSIEKG (130 aa). A coiled-coil region spans residues 41 to 61; it reads IGEAEEEKKEDEEEGEAKEGE. A compositionally biased stretch (acidic residues) spans 69–82; it reads DDVESEEEEEEEEG. Basic and acidic residues-rich tracts occupy residues 83-93 and 100-110; these read SGSKKSSEKET and RPTRERKKVER. A coiled-coil region spans residues 185 to 205; sequence EKEEEKQRARIKEKIDKCVKE. Residues 246-430 are disordered; it reads IIADQEKAKK…GKAKAEPTRK (185 aa). Residues 253-263 show a composition bias toward basic residues; sequence AKKRKSTPKRG. A Nuclear localization signal 1 motif is present at residues 260–267; the sequence is PKRGKSGE. Residues 286 to 332 are compositionally biased toward acidic residues; that stretch reads SDTEEGKDEGDADSEGTNDPHEEDDAAPEEESDHEKTDTDDEKDEVE. 2 consecutive short sequence motifs (nuclear localization signal) follow at residues 343–350 and 384–391; these read SKKTVEES and AKKQKVDH. Over residues 374–384 the composition is skewed to polar residues; that stretch reads KQIAKSTSSPA. A compositionally biased stretch (basic and acidic residues) spans 387–397; sequence QKVDHVESSKE. Residues 426–481 enclose the DEK-C domain; the sequence is EPTRKEMLEVVSKILKEVDFNTATLSDILQKLSDHFGVELSHRKPEVKDVITEAIN. 2 DNA-binding regions span residues 444–458 and 473–477; these read DFNT…QKLS and KDVIT. The segment at 482–530 is disordered; it reads AMTDDEEEDEEEEAEAGSDKEKEEVKGEEEEEKAEAESDKEKEKEEPKD. Acidic residues predominate over residues 484–497; sequence TDDEEEDEEEEAEA. Positions 492–527 form a coiled coil; that stretch reads EEEAEAGSDKEKEEVKGEEEEEKAEAESDKEKEKEE. The span at 516-530 shows a compositional bias: basic and acidic residues; that stretch reads EAESDKEKEKEEPKD.

In terms of assembly, found in a mRNA splicing-dependent exon junction complex (EJC). Binds specifically histones H3 and H4.

It is found in the nucleus. Its subcellular location is the nucleolus. Chromatin-associated protein which contributes to the modulation of chromatin structure (such as super-helical structure of DNA) and function. Binds to chromatin of protein-coding genes throughout the genome to regulate nucleosome occupancy and chromatin accessibility, and to modulate the expression of target genes. This is DEK domain-containing chromatin-associated protein 2 from Arabidopsis thaliana (Mouse-ear cress).